The following is a 394-amino-acid chain: Putative F-box protein At5g66830 (394 aa).

An F-box domain is found at 17–63 (DWCWSKLPSDLMQFVFDRLGFADFQRAKSVCSSWLSVSRNSQPNNQI).

This is Putative F-box protein At5g66830 from Arabidopsis thaliana (Mouse-ear cress).